The following is a 346-amino-acid chain: Pheromone receptor 2 (346 aa).

7 helical membrane-spanning segments follow: residues 8–28 (VSFGVLCLLAGCISTSSCLIH), 34–54 (IGVLLMMFWCFTGLVNKGINA), 71–94 (LSAIIERTWQFGLCCSALCVLQRL), 115–135 (LIDFGVGLGLPALQIPMFFIV), 160–180 (FIYHLWRLLVSLVCAVYAVLV), 219–239 (VLVSAGQFYVIIQSLQIGGLL), and 270–290 (LSILRWFSLTPAMALFVFFGL).

It belongs to the G-protein coupled receptor 4 family.

It localises to the membrane. Functionally, receptor for the A1 pheromone, a prenylated mating factor. This chain is Pheromone receptor 2 (PRA2), found in Mycosarcoma maydis (Corn smut fungus).